The primary structure comprises 433 residues: FAD-dependent monooxygenase notI (433 aa).

Residues Glu-45 and Arg-117 each contribute to the FAD site. The active site involves Arg-195. FAD contacts are provided by Asp-314 and Ala-327.

It belongs to the paxM FAD-dependent monooxygenase family. FAD serves as cofactor.

Its pathway is alkaloid biosynthesis. Functionally, FAD-dependent monooxygenase; part of the gene cluster that mediates the biosynthesis of notoamide, a fungal indole alkaloid that belongs to a family of natural products containing a characteristic bicyclo[2.2.2]diazaoctane core. The first step of notoamide biosynthesis involves coupling of L-proline and L-tryptophan by the bimodular NRPS notE, to produce cyclo-L-tryptophan-L-proline called brevianamide F. The reverse prenyltransferase notF then acts as a deoxybrevianamide E synthase and converts brevianamide F to deoxybrevianamide E via reverse prenylation at C-2 of the indole ring leading to the bicyclo[2.2.2]diazaoctane core. Deoxybrevianamide E is further hydroxylated at C-6 of the indole ring, likely catalyzed by the cytochrome P450 monooxygenase notG, to yield 6-hydroxy-deoxybrevianamide E. 6-hydroxy-deoxybrevianamide E is a specific substrate of the prenyltransferase notC for normal prenylation at C-7 to produce 6-hydroxy-7-prenyl-deoxybrevianamide, also called notoamide S. As the proposed pivotal branching point in notoamide biosynthesis, notoamide S can be diverted to notoamide E through an oxidative pyran ring closure putatively catalyzed by either notH cytochrome P450 monooxygenase or the notD FAD-linked oxidoreductase. This step would be followed by an indole 2,3-epoxidation-initiated pinacol-like rearrangement catalyzed by the notB FAD-dependent monooxygenase leading to the formation of notoamide C and notoamide D. On the other hand notoamide S is converted to notoamide T by notH (or notD), a bifunctional oxidase that also functions as the intramolecular Diels-Alderase responsible for generation of (+)-notoamide T. To generate antipodal (-)-notoaminide T, notH' (or notD') in Aspergillus versicolor is expected to catalyze a Diels-Alder reaction leading to the opposite stereochemistry. The remaining oxidoreductase notD (or notH) likely catalyzes the oxidative pyran ring formation to yield (+)-stephacidin A. The FAD-dependent monooxygenase notI is highly similar to notB and is predicted to catalyze a similar conversion from (+)-stephacidin A to (-)-notoamide B via the 2,3-epoxidation of (+)-stephacidin A followed by a pinacol-type rearrangement. Finally, it remains unclear which enzyme could be responsible for the final hydroxylation steps leading to notoamide A and sclerotiamide. The protein is FAD-dependent monooxygenase notI of Aspergillus sp. (strain MF297-2).